The following is a 674-amino-acid chain: Inactivation-no-after-potential D protein (674 aa).

The 90-residue stretch at 17 to 106 folds into the PDZ 1 domain; sequence MVTLDKTGKK…KIELEIQTFD (90 aa). Positions 133 to 192 are disordered; sequence QTTNNNASGGQGMGQGQGQGQGMAGMNRQQSMQKRNTTFTASMRQKHSNYADEDDEDTRD. The segment covering 141–155 has biased composition (gly residues); the sequence is GGQGMGQGQGQGQGM. The segment covering 159 to 175 has biased composition (polar residues); sequence NRQQSMQKRNTTFTASM. 2 consecutive PDZ domains span residues 249-332 and 364-448; these read RIEV…TSRR and ARTV…LTLK. Residues 458 to 475 are compositionally biased toward basic and acidic residues; that stretch reads AAEEKKKEEAKKEEEKPQ. Residues 458 to 481 form a disordered region; the sequence is AAEEKKKEEAKKEEEKPQEPATAE. PDZ domains follow at residues 489–577 and 584–664; these read LIEL…RADP and NVDL…TRPK. 2 positions are modified to phosphoserine: Ser598 and Ser600.

As to quaternary structure, interacts with the C-terminus of trp, and with norpA and inaC to form the inaD signaling complex. Interacts with Fkbp59, which together with trpl, rhodopsin and calmodulin may also be part of the inaD complex. Phosphorylated by inaC. Expressed in photoreceptor cells (R cells) of the compound eyes and ocelli.

It localises to the cell projection. The protein localises to the rhabdomere. Involved in the negative feedback regulation of the light-activated signaling cascade in photoreceptors through a calcium-mediated process. Interacts with tetrapeptide ligand located in C-terminal sequence of 3 key components of the visual cascade, tethering them and forming a macromolecular signaling phototransduction complex. This chain is Inactivation-no-after-potential D protein (inaD), found in Drosophila melanogaster (Fruit fly).